Reading from the N-terminus, the 925-residue chain is MAEANPRRGKMRFRRNAASFPGNLHLVLVLRPTSFLQRTFTDIGFWFSQEDFMLKLPVVMLSSVSDLLTYIDDKQLTPELGGTLQYCHSEWIIFRNAIENFALTVKEMAQMLQSFGTELAETELPDDIPSIEEILAIRAERYHLLKNDITAVTKEGKILLTNLEVPDTEGAVSSRLECHRQISGDWQTINKLLTQVHDMETAFDGFWEKHQLKMEQYLQLWKFEQDFQQLVTEVEFLLNQQAELADVTGTIAQVKQKIKKLENLDENSQELLSKAQFVILHGHKLAANHHYALDLICQRCNELRYLSDILVNEIKAKRIQLSRTFKMHKLLQQARQCCDEGECLLANQEIDKFQSKEDAQKALQDIENFLEMALPFINYEPETLQYEFDVILSPELKVQMKTIQLKLENIRSIFENQQAGFRNLADKHVRPIQFVVPTPENLVTSGTPFFSSKQGKKTWRQNQSNLKIEVVPDCQEKRSSGPSSSLDNGNSLDVLKNHVLNELIQTERVYVRELYTVLLGYRAEMDNPEMFDLMPPLLRNKKDILFGNMAEIYEFHNDIFLSSLENCAHAPERVGPCFLERKDDFQMYAKYCQNKPRSETIWRKYSECAFFQECQRKLKHRLRLDSYLLKPVQRITKYQLLLKELLKYSKDCEGSALLKKALDAMLDLLKSVNDSMHQIAINGYIGNLNELGKMIMQGGFSVWIGHKKGATKMKDLARFKPMQRHLFLYEKAIVFCKRRVESGEGSDRYPSYSFKHCWKMDEVGITEYVKGDNRKFEIWYGEKEEVYIVQASNVDVKMTWLKEIRNILLKQQELLTVKKRKQQDQLTERDKFQISLQQNDEKQQGAFISTEETELEHTSTVVEVCEAIASVQAEANTVWTEASQSAEISEEPAEWSSNYFYPTYDENEEENRPLMRPVSEMALLY.

A CRAL-TRIO domain is found at 1-88 (MAEANPRRGK…ELGGTLQYCH (88 aa)). The stretch at 221-322 (WKFEQDFQQL…EIKAKRIQLS (102 aa)) is one Spectrin repeat. The region spanning 495–675 (LKNHVLNELI…LDLLKSVNDS (181 aa)) is the DH domain. The PH domain maps to 687–809 (NLNELGKMIM…WLKEIRNILL (123 aa)).

This sequence belongs to the MCF2 family. As to quaternary structure, interacts with an array of inositol phospholipids such as phosphatidylinositol 3-phosphate (PI3P), phosphatidylinositol 4-phosphate (PI4P) and phosphatidylinositol 5-phosphate (PI5P). May interact with CCPG1. Post-translationally, phosphorylation by TNK2 enhances guanine nucleotide exchange factor (GEF) activity toward Rho family proteins. Isoform 1 is expressed only in brain. Isoform 3 is expressed in heart, kidney, spleen, liver and testis. Isoform 4 is expressed in brain, heart, kidney, testis, placenta, stomach and peripheral blood. The protein is detectable in brain, heart, kidney, intestine, muscle, lung and testis.

It localises to the cytoplasm. The protein localises to the membrane. Guanine nucleotide exchange factor (GEF) that modulates the Rho family of GTPases. Promotes the conversion of some member of the Rho family GTPase from the GDP-bound to the GTP-bound form. Isoform 1 exhibits no activity toward RHOA, RAC1 or CDC42. Isoform 2 exhibits decreased GEF activity toward CDC42. Isoform 3 exhibits a weak but significant activity toward RAC1 and CDC42. Isoform 4 exhibits significant activity toward RHOA and CDC42. The truncated DBL oncogene is active toward RHOA, RAC1 and CDC42. In Homo sapiens (Human), this protein is Proto-oncogene DBL (MCF2).